Reading from the N-terminus, the 745-residue chain is Probable xanthine dehydrogenase subunit D (745 aa).

Mo-molybdopterin contacts are provided by Gln204, Phe235, and Ala508.

This sequence belongs to the xanthine dehydrogenase family. Could be composed of four subunits: PucA, PucC, PucD and PucE. Requires Mo-molybdopterin as cofactor.

It catalyses the reaction xanthine + NAD(+) + H2O = urate + NADH + H(+). The enzyme catalyses hypoxanthine + NAD(+) + H2O = xanthine + NADH + H(+). It functions in the pathway purine metabolism; hypoxanthine degradation; urate from hypoxanthine: step 1/2. The protein operates within purine metabolism; hypoxanthine degradation; urate from hypoxanthine: step 2/2. Its function is as follows. Oxidizes hypoxanthine and xanthine to uric acid. The polypeptide is Probable xanthine dehydrogenase subunit D (pucD) (Bacillus subtilis (strain 168)).